Reading from the N-terminus, the 1102-residue chain is Phosphatidylinositol 4,5-bisphosphate 3-kinase catalytic subunit gamma isoform (1102 aa).

Positions 34–141 constitute a PI3K-ABD domain; it reads SMELIPIEFV…PGQIHVVQRH (108 aa). The PI3K-RBD domain maps to 217-309; it reads NNCVFIVIHR…GEEIHLVLDT (93 aa). Positions 357-521 constitute a C2 PI3K-type domain; sequence CDRKFRVKIR…NSMSISILLD (165 aa). The region spanning 541-723 is the PIK helical domain; it reads DRVRAEMPNQ…AVILEAYLRG (183 aa). Residues 797–1080 enclose the PI3K/PI4K catalytic domain; the sequence is VIEKCKVMAS…QIEVCRDKGW (284 aa). Residues 803–809 form a G-loop region; it reads VMASKKK. ATP is bound by residues 829-838 and 864-872; these read GIIFKHGDDL and LLPYGCIST. A catalytic loop region spans residues 943–951; sequence GIGDRHNDN. 961 to 969 lines the ATP pocket; sequence FHIDFGHIL. The tract at residues 962–988 is activation loop; sequence HIDFGHILGNYKSFLGINKERVPFVLT. A Phosphothreonine; by PKA modification is found at Thr1024. Ser1101 bears the Phosphoserine; by autocatalysis mark.

It belongs to the PI3/PI4-kinase family. Heterodimer of a catalytic subunit PIK3CG and a PIK3R5 or PIK3R6 regulatory subunit. Interacts with GRK2 through the PIK helical domain. Interaction with GRK2 is required for targeting to agonist-occupied receptor. Interacts with PDE3B; regulates PDE3B activity and thereby cAMP levels in cells. Interacts with TPM2. Interacts with EPHA8; regulates integrin-mediated cell adhesion to substrate. Interacts with HRAS; the interaction is required for membrane recruitment and beta-gamma G protein dimer-dependent activation of the PI3K gamma complex PIK3CG:PIK3R6. Post-translationally, autophosphorylation at Ser-1101 has no effect on the phosphatidylinositol-4,5-bisphosphate 3-kinase activity.

It localises to the cytoplasm. The protein resides in the cell membrane. The enzyme catalyses a 1,2-diacyl-sn-glycero-3-phospho-(1D-myo-inositol-4,5-bisphosphate) + ATP = a 1,2-diacyl-sn-glycero-3-phospho-(1D-myo-inositol-3,4,5-trisphosphate) + ADP + H(+). The catalysed reaction is a 1,2-diacyl-sn-glycero-3-phospho-(1D-myo-inositol) + ATP = a 1,2-diacyl-sn-glycero-3-phospho-(1D-myo-inositol-3-phosphate) + ADP + H(+). It catalyses the reaction a 1,2-diacyl-sn-glycero-3-phospho-(1D-myo-inositol 4-phosphate) + ATP = a 1,2-diacyl-sn-glycero-3-phospho-(1D-myo-inositol-3,4-bisphosphate) + ADP + H(+). It carries out the reaction L-seryl-[protein] + ATP = O-phospho-L-seryl-[protein] + ADP + H(+). The protein operates within phospholipid metabolism; phosphatidylinositol phosphate biosynthesis. With respect to regulation, activated by both the alpha and the beta-gamma G proteins following stimulation of G protein-coupled receptors (GPCRs). Activation by GPCRs is assisted by the regulatory subunits (PIK3R5 or PIK3R6) leading to the translocation from the cytosol to the plasma membrane and to kinase activation. When bound to PIK3R5 the PI3K activity of PIK3CG could be activated greater than 100-fold by the beta-gamma G proteins. Phosphoinositide-3-kinase (PI3K) that phosphorylates PtdIns(4,5)P2 (Phosphatidylinositol 4,5-bisphosphate) to generate phosphatidylinositol 3,4,5-trisphosphate (PIP3). PIP3 plays a key role by recruiting PH domain-containing proteins to the membrane, including AKT1 and PDPK1, activating signaling cascades involved in cell growth, survival, proliferation, motility and morphology. Links G-protein coupled receptor activation to PIP3 production. Involved in immune, inflammatory and allergic responses. Modulates leukocyte chemotaxis to inflammatory sites and in response to chemoattractant agents. May control leukocyte polarization and migration by regulating the spatial accumulation of PIP3 and by regulating the organization of F-actin formation and integrin-based adhesion at the leading edge. Controls motility of dendritic cells. Participates in T-lymphocyte migration. Regulates T-lymphocyte proliferation and cytokine production. Required for B-lymphocyte development and signaling. Together with other PI3Ks are involved in the oxidative burst produced by neutrophils in response to chemotactic agents. Together with PIK3CD regulate neutrophil extravasation. Together with PIK3CB promotes platelet aggregation and thrombosis. Regulates alpha-IIb/beta-3 integrins (ITGA2B/ ITGB3) adhesive function in platelets downstream of P2Y12 through a lipid kinase activity-independent mechanism. May have also a lipid kinase activity-dependent function in platelet aggregation. Involved in endothelial progenitor cell migration. Negative regulator of cardiac contractility. Modulates cardiac contractility by anchoring protein kinase A (PKA) and PDE3B activation, reducing cAMP levels. Regulates cardiac contractility also by promoting beta-adrenergic receptor internalization by binding to GRK2 and by non-muscle tropomyosin phosphorylation. Also has serine/threonine protein kinase activity: both lipid and protein kinase activities are required for beta-adrenergic receptor endocytosis. May also have a scaffolding role in modulating cardiac contractility. Contribute to cardiac hypertrophy under pathological stress. Through simultaneous binding of PDE3B to RAPGEF3 and PIK3R6 is assembled in a signaling complex in which the PI3K gamma complex is activated by RAPGEF3 and which is involved in angiogenesis. In neutrophils, participates in a phospholipase C-activating N-formyl peptide-activated GPCR (G protein-coupled receptor) signaling pathway downstream of RASGRP4-mediated Ras-activation, to promote neutrophil functional responses. The polypeptide is Phosphatidylinositol 4,5-bisphosphate 3-kinase catalytic subunit gamma isoform (PIK3CG) (Sus scrofa (Pig)).